The sequence spans 882 residues: Putative HTH-type transcriptional regulator Mb0914c (882 aa).

Residues 814–879 (PARGWGSLTP…QLVDEAARRG (66 aa)) enclose the HTH luxR-type domain. The segment at residues 838-857 (NKDIAKRLFVSPRTVQTHLT) is a DNA-binding region (H-T-H motif).

The polypeptide is Putative HTH-type transcriptional regulator Mb0914c (Mycobacterium bovis (strain ATCC BAA-935 / AF2122/97)).